A 195-amino-acid chain; its full sequence is Exosome complex component CSL4 (195 aa).

2 positions are modified to phosphoserine: serine 21 and serine 98. The S1 motif domain maps to 66 to 147 (DVGAIVTCKV…AQSNYLLTTA (82 aa)).

The protein belongs to the CSL4 family. Component of the RNA exosome core complex (Exo-9), composed of EXOSC1, EXOSC2, EXOSC3, EXOSC4, EXOSC5, EXOSC6, EXOSC7, EXOSC8 and EXOSC9; within the complex interacts with EXOSC6. The catalytically inactive RNA exosome core complex (Exo-9) associates with the catalytic subunit EXOSC10/RRP6. Exo-9 may associate with DIS3 to form the nucleolar exosome complex, or DIS3L to form the cytoplasmic exosome complex. Exo-9 is formed by a hexameric base ring consisting of the heterodimers EXOSC4-EXOSC9, EXOSC5-EXOSC8 and EXOSC6-EXOSC7, and a cap ring consisting of EXOSC1, EXOSC2 and EXOSC3. The RNA exosome complex associates with cofactors C1D/RRP47, MPHOSPH6/MPP6 and MTREX/MTR4. Interacts with DDX60.

The protein localises to the nucleus. The protein resides in the nucleolus. Its subcellular location is the cytoplasm. Its function is as follows. Non-catalytic component of the RNA exosome complex which has 3'-&gt;5' exoribonuclease activity and participates in a multitude of cellular RNA processing and degradation events. In the nucleus, the RNA exosome complex is involved in proper maturation of stable RNA species such as rRNA, snRNA and snoRNA, in the elimination of RNA processing by-products and non-coding 'pervasive' transcripts, such as antisense RNA species and promoter-upstream transcripts (PROMPTs), and of mRNAs with processing defects, thereby limiting or excluding their export to the cytoplasm. The RNA exosome may be involved in Ig class switch recombination (CSR) and/or Ig variable region somatic hypermutation (SHM) by targeting AICDA deamination activity to transcribed dsDNA substrates. In the cytoplasm, the RNA exosome complex is involved in general mRNA turnover and specifically degrades inherently unstable mRNAs containing AU-rich elements (AREs) within their 3' untranslated regions, and in RNA surveillance pathways, preventing translation of aberrant mRNAs. It seems to be involved in degradation of histone mRNA. The catalytic inactive RNA exosome core complex of 9 subunits (Exo-9) is proposed to play a pivotal role in the binding and presentation of RNA for ribonucleolysis, and to serve as a scaffold for the association with catalytic subunits and accessory proteins or complexes. EXOSC1 as peripheral part of the Exo-9 complex stabilizes the hexameric ring of RNase PH-domain subunits through contacts with EXOSC6 and EXOSC8. The polypeptide is Exosome complex component CSL4 (EXOSC1) (Homo sapiens (Human)).